The following is a 40-amino-acid chain: Photosystem I reaction center subunit IX (40 aa).

A helical transmembrane segment spans residues 4 to 24 (FFESWPMAAVLWVWLTAGIIV).

The protein belongs to the PsaJ family.

Its subcellular location is the cellular thylakoid membrane. Functionally, may help in the organization of the PsaE and PsaF subunits. The polypeptide is Photosystem I reaction center subunit IX (Prochlorococcus marinus (strain MIT 9313)).